We begin with the raw amino-acid sequence, 153 residues long: D-amino acid oxidase regulator (153 aa).

Positions M1–F25 are involved in targeting to the mitochondrion. The interaction with DAO stretch occupies residues K138–E153.

As to quaternary structure, interacts with DAO (D-amino acid oxidase); the interaction is direct, can occur in the presence or absence of FAD or substrate bound to DAO, and results in a complex containing two DAO homodimers and two DAOA monomers. Interacts with DDO (D-aspartate oxidase); the interaction is direct. Interacts wih SOD1; the interaction is direct. Interacts with MSRB2; the interaction is direct. Expressed in the amygdala and in astrocytes of the cortex (at protein level). Expressed in the caudate nucleus, spinal cord and testis.

Its subcellular location is the cytoplasm. The protein localises to the cytosol. The protein resides in the golgi apparatus. It localises to the mitochondrion. In terms of biological role, may suppress DAO (D-amino acid oxidase) and SOD1 activity and promote their degradation. Has conversely also been suggested to function as a DAO activator. May stimulate the degradation of DDO (D-aspartate oxidase). May play a role in mitochondrial fission. The protein is D-amino acid oxidase regulator (DAOA) of Homo sapiens (Human).